Reading from the N-terminus, the 447-residue chain is UDP-N-acetylmuramate--L-alanine ligase (447 aa).

Residue 115–121 (GAHGKTS) coordinates ATP.

Belongs to the MurCDEF family.

The protein localises to the cytoplasm. It catalyses the reaction UDP-N-acetyl-alpha-D-muramate + L-alanine + ATP = UDP-N-acetyl-alpha-D-muramoyl-L-alanine + ADP + phosphate + H(+). The protein operates within cell wall biogenesis; peptidoglycan biosynthesis. In terms of biological role, cell wall formation. The polypeptide is UDP-N-acetylmuramate--L-alanine ligase (Streptococcus thermophilus (strain CNRZ 1066)).